The chain runs to 346 residues: Phosphate acyltransferase (346 aa).

The protein belongs to the PlsX family. As to quaternary structure, homodimer. Probably interacts with PlsY.

The protein localises to the cytoplasm. It catalyses the reaction a fatty acyl-[ACP] + phosphate = an acyl phosphate + holo-[ACP]. It participates in lipid metabolism; phospholipid metabolism. In terms of biological role, catalyzes the reversible formation of acyl-phosphate (acyl-PO(4)) from acyl-[acyl-carrier-protein] (acyl-ACP). This enzyme utilizes acyl-ACP as fatty acyl donor, but not acyl-CoA. The chain is Phosphate acyltransferase from Synechococcus elongatus (strain ATCC 33912 / PCC 7942 / FACHB-805) (Anacystis nidulans R2).